A 516-amino-acid chain; its full sequence is Histone H4 transcription factor (516 aa).

3 C2H2-type zinc fingers span residues 15–39 (LQCEWGSCSFVCSAMEEFCEHVTQH), 127–151 (FLCLWEHCENSFDNPEWFYRHVEAH), and 167–191 (VLCGWKGCTCTFKDRFKLREHLRSH). The segment at 197 to 219 (VACPTCGGMFANNTKFLDHIRRQ) adopts a C2H2-type 4; degenerate zinc-finger fold. 5 C2H2-type zinc fingers span residues 227 to 249 (FQCSHCSKRFATERLLRDHMRNH), 253 to 276 (YKCPLCDMTCPLPSSLRNHMRFRH), 282 to 304 (FKCDCCDYSCKNLIDLRKHLDTH), 310 to 335 (YSCDFENCTFSARSLYSIKSHYRKVH), and 343 to 366 (YRCHVCDKCFTRGNNLTVHLRKKH). The interaction with NPAT stretch occupies residues 371-516 (PSGHPRFRYK…AAEEPEVQMV (146 aa)). Residues 372 to 405 (SGHPRFRYKEHEDGYMRLQLVRYESVELTQQLLR) are required for activation of histone H4 transcription and contributes to DNA-binding. 2 disordered regions span residues 429-456 (TVPGEPGPQEEAEEEGGGGEGIALPASQ) and 486-516 (PGEPPPASEPPSGGVMGELQGAAEEPEVQMV). Acidic residues predominate over residues 436 to 445 (PQEEAEEEGG).

In terms of assembly, binds MBD2 and a histone deacetylase complex. Interacts with NPAT. In terms of processing, ubiquitinated. Ubiquitination may lead to proteasome-mediated degradation.

It localises to the nucleus. Functionally, transcriptional repressor that binds to the consensus sequence 5'-CGGACGTT-3' and to the RB1 promoter. Transcriptional activator that promotes histone H4 gene transcription at the G1/S phase transition in conjunction with NPAT. Also activates transcription of the ATM and PRKDC genes. Autoregulates its expression by associating with its own promoter. This is Histone H4 transcription factor (HINFP) from Bos taurus (Bovine).